The sequence spans 246 residues: MPTAVSDAAAPAQARAWIEAAERVMVLTGAGVSAESGVPTFRDALTGLWARFNPEDLATEAAYREHPRMVWDWYQERRARVSQVQPNPAHLAIAALATRKTVALVTQNVDGLHQRAGSVGVIELHGNLFANKWLDGCGKCDVATAEPGRPPRCAACGAMLRPGVVWFGERLPVVANYRAEEAANTCDVCLVVGTSGMVYPAAGLPGLAKDHGARVIVVNPEPSVLDETADLVIHQPAGVCLPAMLA.

Positions 2–246 (PTAVSDAAAP…AGVCLPAMLA (245 aa)) constitute a Deacetylase sirtuin-type domain. 29 to 49 (GAGVSAESGVPTFRDALTGLW) contacts NAD(+). Positions 74 and 77 each coordinate substrate. 107 to 110 (QNVD) serves as a coordination point for NAD(+). The active-site Proton acceptor is the His-125. Zn(2+)-binding residues include Cys-137, Cys-140, Cys-153, and Cys-156. NAD(+)-binding positions include 193-195 (GTS), 219-221 (NPE), and Ala-237.

It belongs to the sirtuin family. Class III subfamily. Zn(2+) is required as a cofactor.

It is found in the cytoplasm. The enzyme catalyses N(6)-acetyl-L-lysyl-[protein] + NAD(+) + H2O = 2''-O-acetyl-ADP-D-ribose + nicotinamide + L-lysyl-[protein]. The catalysed reaction is N(6)-succinyl-L-lysyl-[protein] + NAD(+) + H2O = 2''-O-succinyl-ADP-D-ribose + nicotinamide + L-lysyl-[protein]. In terms of biological role, NAD-dependent lysine deacetylase and desuccinylase that specifically removes acetyl and succinyl groups on target proteins. Modulates the activities of several proteins which are inactive in their acylated form. In Ralstonia nicotianae (strain ATCC BAA-1114 / GMI1000) (Ralstonia solanacearum), this protein is NAD-dependent protein deacylase.